We begin with the raw amino-acid sequence, 354 residues long: Protein ECM8 (354 aa).

Functionally, may be involved in cell wall organization and biogenesis. This is Protein ECM8 (ECM8) from Saccharomyces cerevisiae (strain ATCC 204508 / S288c) (Baker's yeast).